Here is a 156-residue protein sequence, read N- to C-terminus: 3-dehydroquinate dehydratase 1 (156 aa).

Tyrosine 32 acts as the Proton acceptor in catalysis. Substrate-binding residues include asparagine 84, histidine 90, and aspartate 97. Histidine 110 functions as the Proton donor in the catalytic mechanism. Substrate contacts are provided by residues leucine 111 to serine 112 and arginine 121.

The protein belongs to the type-II 3-dehydroquinase family. As to quaternary structure, homododecamer.

The enzyme catalyses 3-dehydroquinate = 3-dehydroshikimate + H2O. Its pathway is metabolic intermediate biosynthesis; chorismate biosynthesis; chorismate from D-erythrose 4-phosphate and phosphoenolpyruvate: step 3/7. Catalyzes a trans-dehydration via an enolate intermediate. This is 3-dehydroquinate dehydratase 1 (aroQ1) from Ralstonia nicotianae (strain ATCC BAA-1114 / GMI1000) (Ralstonia solanacearum).